The sequence spans 242 residues: Ribonuclease PH (242 aa).

Phosphate is bound by residues R86 and 124 to 126 (GTR).

The protein belongs to the RNase PH family. Homohexameric ring arranged as a trimer of dimers.

It carries out the reaction tRNA(n+1) + phosphate = tRNA(n) + a ribonucleoside 5'-diphosphate. In terms of biological role, phosphorolytic 3'-5' exoribonuclease that plays an important role in tRNA 3'-end maturation. Removes nucleotide residues following the 3'-CCA terminus of tRNAs; can also add nucleotides to the ends of RNA molecules by using nucleoside diphosphates as substrates, but this may not be physiologically important. Probably plays a role in initiation of 16S rRNA degradation (leading to ribosome degradation) during starvation. This chain is Ribonuclease PH, found in Bacillus pumilus (strain SAFR-032).